We begin with the raw amino-acid sequence, 533 residues long: Malate synthase A (533 aa).

The active-site Proton acceptor is the arginine 166. The active-site Proton donor is aspartate 447.

It belongs to the malate synthase family.

The protein resides in the cytoplasm. The catalysed reaction is glyoxylate + acetyl-CoA + H2O = (S)-malate + CoA + H(+). It functions in the pathway carbohydrate metabolism; glyoxylate cycle; (S)-malate from isocitrate: step 2/2. The polypeptide is Malate synthase A (aceB) (Escherichia coli (strain K12)).